The sequence spans 146 residues: VHLTDAEKALVTGLWGKVKPDELGGEALGRLLVGYPWTQRFFDSFGDLSSASALMGNPKVKAHGKKVLDSFSEGLKHLDNLKGTFASLSELHCDKLHVDPENFKLLGNMLVLVLAHLLGKDFTPAAQAAYQKVVAGVATALAHKYH.

The residue at position 1 (V1) is an N-acetylvaline. In terms of domain architecture, Globin spans 2–146 (HLTDAEKALV…VATALAHKYH (145 aa)). T12 carries the phosphothreonine modification. Position 44 is a phosphoserine (S44). At K59 the chain carries N6-acetyllysine. Residue H63 coordinates heme b. K82 bears the N6-acetyllysine mark. Heme b is bound at residue H92. C93 bears the S-nitrosocysteine mark. Residue K144 is modified to N6-acetyllysine.

It belongs to the globin family. As to quaternary structure, heterotetramer of two alpha chains and two beta chains. Red blood cells.

Involved in oxygen transport from the lung to the various peripheral tissues. This chain is Hemoglobin subunit beta, found in Peromyscus californicus (California mouse).